A 326-amino-acid chain; its full sequence is rRNA 2'-O-methyltransferase fibrillarin (326 aa).

Residues 1–84 (MAFQPGSRGG…GGARGGAKGG (84 aa)) are disordered. Residues 7–83 (SRGGRGGARG…RGGARGGAKG (77 aa)) show a composition bias toward gly residues. Arg8, Arg11, Arg15, Arg19, Arg23, Arg26, Arg32, Arg36, Arg39, Arg45, Arg49, Arg55, Arg59, Arg63, Arg67, Arg71, Arg74, and Arg78 each carry asymmetric dimethylarginine. S-adenosyl-L-methionine is bound by residues 180 to 181 (TS), 199 to 200 (EF), 224 to 225 (DA), and 244 to 247 (DVAQ).

This sequence belongs to the methyltransferase superfamily. Fibrillarin family. In terms of assembly, component of box C/D small nucleolar ribonucleoprotein (snoRNP) particles that contain SNU13, NOP1, SIK1/NOP56 and NOP58, plus a guide RNA. In terms of processing, by homology to other fibrillarins, some or all of the N-terminal domain arginines are modified to asymmetric dimethylarginine (DMA).

Its subcellular location is the nucleus. The protein resides in the nucleolus. It carries out the reaction L-glutaminyl-[histone H2A] + S-adenosyl-L-methionine = N(5)-methyl-L-glutaminyl-[histone H2A] + S-adenosyl-L-homocysteine + H(+). In terms of biological role, S-adenosyl-L-methionine-dependent methyltransferase that has the ability to methylate both RNAs and proteins. Involved in pre-rRNA processing. Utilizes the methyl donor S-adenosyl-L-methionine to catalyze the site-specific 2'-hydroxyl methylation of ribose moieties in pre-ribosomal RNA. Site specificity is provided by a guide RNA that base pairs with the substrate. Methylation occurs at a characteristic distance from the sequence involved in base pairing with the guide RNA. Also acts as a protein methyltransferase by mediating methylation of 'Gln-105' of histone H2A (H2AQ105me), a modification that impairs binding of the FACT complex and is specifically present at 35S ribosomal DNA locus. The protein is rRNA 2'-O-methyltransferase fibrillarin (NOP1) of Eremothecium gossypii (strain ATCC 10895 / CBS 109.51 / FGSC 9923 / NRRL Y-1056) (Yeast).